A 511-amino-acid chain; its full sequence is D-alanine--D-alanyl carrier protein ligase (511 aa).

152–153 (TS) serves as a coordination point for ATP. D199 is a D-alanine binding site. 294-299 (NAYGPT) provides a ligand contact to ATP. V303 is a binding site for D-alanine. Residues D385, 397 to 400 (YGGR), and K499 contribute to the ATP site. Residue K499 coordinates D-alanine.

It belongs to the ATP-dependent AMP-binding enzyme family. DltA subfamily.

It localises to the cytoplasm. The enzyme catalyses holo-[D-alanyl-carrier protein] + D-alanine + ATP = D-alanyl-[D-alanyl-carrier protein] + AMP + diphosphate. It participates in cell wall biogenesis; lipoteichoic acid biosynthesis. Its function is as follows. Catalyzes the first step in the D-alanylation of lipoteichoic acid (LTA), the activation of D-alanine and its transfer onto the D-alanyl carrier protein (Dcp) DltC. In an ATP-dependent two-step reaction, forms a high energy D-alanyl-AMP intermediate, followed by transfer of the D-alanyl residue as a thiol ester to the phosphopantheinyl prosthetic group of the Dcp. D-alanylation of LTA plays an important role in modulating the properties of the cell wall in Gram-positive bacteria, influencing the net charge of the cell wall. This is D-alanine--D-alanyl carrier protein ligase from Streptococcus agalactiae serotype III (strain NEM316).